We begin with the raw amino-acid sequence, 434 residues long: Fez family zinc finger protein 2 (434 aa).

The short motif at serine 27 to proline 42 is the Engrailed homology 1 repressor element. C2H2-type zinc fingers lie at residues phenylalanine 253–histidine 275, phenylalanine 281–histidine 303, histidine 309–histidine 331, phenylalanine 337–histidine 359, tyrosine 365–histidine 387, and phenylalanine 393–histidine 416.

It belongs to the krueppel C2H2-type zinc-finger protein family.

The protein localises to the nucleus. Functionally, transcription repressor. Component of the regulatory cascade that controls the development of dopaminergic (DA) and serotonergic (5HT) neurons. The protein is Fez family zinc finger protein 2 (fezf2) of Xenopus laevis (African clawed frog).